A 176-amino-acid chain; its full sequence is Viral interleukin-10 homolog (176 aa).

An N-terminal signal peptide occupies residues Met-1–Pro-25. Disulfide bonds link Cys-38-Cys-128 and Cys-82-Cys-133. The N-linked (GlcNAc...) asparagine; by host glycan is linked to Asn-152.

The protein belongs to the IL-10 family. Homodimer; disulfide-linked.

It localises to the secreted. Functionally, functional viral IL-10 homolog. Can bind to the human IL-10 receptor and compete with human IL-10 for binding sites. Requires both subunits of the human IL-10 receptor complex to induce signal transduction events and biological activities. IL-10 signaling pathway has several immunosuppressive activities that are exploited by the virus. Inhibits TLR-induced type I interferon production in host plasmacytoid dendritic cells. The polypeptide is Viral interleukin-10 homolog (UL111A) (Homo sapiens (Human)).